Reading from the N-terminus, the 137-residue chain is MSSIIRKVISTSKAPAAIGAYSQAVLVDRTIYVSGQIGMDPSSGQLVPGGVAEEAKQALKNLGEILKAAGCDFTNVVKTTVLLADINDFGTVNEIYKTYFQGNLPARAAYQVAALPKGSRIEIEAIAVQGPFTTAGL.

S2 carries the N-acetylserine modification. An N6-succinyllysine mark is found at K13, K60, and K67. T74 bears the Phosphothreonine mark.

It belongs to the RutC family. As to quaternary structure, homotrimer. Interacts with YTHDF2. Liver and kidney.

It localises to the cytoplasm. Its subcellular location is the nucleus. It is found in the peroxisome. The protein localises to the mitochondrion. The enzyme catalyses 2-iminobutanoate + H2O = 2-oxobutanoate + NH4(+). The catalysed reaction is 2-iminopropanoate + H2O = pyruvate + NH4(+). Functionally, catalyzes the hydrolytic deamination of enamine/imine intermediates that form during the course of normal metabolism. May facilitate the release of ammonia from these potentially toxic reactive metabolites, reducing their impact on cellular components. It may act on enamine/imine intermediates formed by several types of pyridoxal-5'-phosphate-dependent dehydratases including L-threonine dehydratase. In terms of biological role, also promotes endoribonucleolytic cleavage of some transcripts by promoting recruitment of the ribonuclease P/MRP complex. Acts by bridging YTHDF2 and the ribonuclease P/MRP complex. RIDA/HRSP12 binds to N6-methyladenosine (m6A)-containing mRNAs containing a 5'-GGUUC-3' motif: cooperative binding of RIDA/HRSP12 and YTHDF2 to such transcripts lead to recruitment of the ribonuclease P/MRP complex and subsequent endoribonucleolytic cleavage. In Rattus norvegicus (Rat), this protein is 2-iminobutanoate/2-iminopropanoate deaminase.